The sequence spans 218 residues: Pyridoxine/pyridoxamine 5'-phosphate oxidase (218 aa).

Substrate contacts are provided by residues 14–17 (RREY) and Lys-72. Residues 67–72 (RIVLLK), 82–83 (YT), Arg-88, Lys-89, and Gln-111 contribute to the FMN site. The substrate site is built by Tyr-129, Arg-133, and Ser-137. Residues 146-147 (QS) and Trp-191 each bind FMN. 197-199 (RLH) is a binding site for substrate. Arg-201 contributes to the FMN binding site.

The protein belongs to the pyridoxamine 5'-phosphate oxidase family. In terms of assembly, homodimer. FMN serves as cofactor.

The catalysed reaction is pyridoxamine 5'-phosphate + O2 + H2O = pyridoxal 5'-phosphate + H2O2 + NH4(+). It carries out the reaction pyridoxine 5'-phosphate + O2 = pyridoxal 5'-phosphate + H2O2. It participates in cofactor metabolism; pyridoxal 5'-phosphate salvage; pyridoxal 5'-phosphate from pyridoxamine 5'-phosphate: step 1/1. Its pathway is cofactor metabolism; pyridoxal 5'-phosphate salvage; pyridoxal 5'-phosphate from pyridoxine 5'-phosphate: step 1/1. Catalyzes the oxidation of either pyridoxine 5'-phosphate (PNP) or pyridoxamine 5'-phosphate (PMP) into pyridoxal 5'-phosphate (PLP). The polypeptide is Pyridoxine/pyridoxamine 5'-phosphate oxidase (Escherichia coli (strain 55989 / EAEC)).